We begin with the raw amino-acid sequence, 155 residues long: Aspartate carbamoyltransferase regulatory chain (155 aa).

Residues Cys113, Cys118, Cys139, and Cys142 each contribute to the Zn(2+) site.

The protein belongs to the PyrI family. As to quaternary structure, contains catalytic and regulatory chains. Zn(2+) is required as a cofactor.

In terms of biological role, involved in allosteric regulation of aspartate carbamoyltransferase. The sequence is that of Aspartate carbamoyltransferase regulatory chain from Methanosphaerula palustris (strain ATCC BAA-1556 / DSM 19958 / E1-9c).